Reading from the N-terminus, the 362-residue chain is Serine/threonine-protein kinase SRK2D (362 aa).

One can recognise a Protein kinase domain in the interval 23–279 (YDFVKDIGSG…IPEITSDKWF (257 aa)). ATP-binding positions include 29 to 37 (IGSGNFGVA) and lysine 52. Residue aspartate 142 is the Proton acceptor of the active site.

Belongs to the protein kinase superfamily. Ser/Thr protein kinase family. Interacts with ABI1. Interacts with I-2, TOPP1 and TOPP2. Interacts with FREE1 (via C-terminus). As to expression, expressed in seeds, seedlings, roots (especially in tips), stems, leaves, shoots, flowers and siliques.

The catalysed reaction is L-seryl-[protein] + ATP = O-phospho-L-seryl-[protein] + ADP + H(+). The enzyme catalyses L-threonyl-[protein] + ATP = O-phospho-L-threonyl-[protein] + ADP + H(+). Functionally, together with SRK2I, key component and activator of the abscisic acid (ABA) signaling pathway that regulates numerous ABA responses, such as seed germination, Pro accumulation, root growth inhibition, dormancy and seedling growth, and, to a lesser extent, stomatal closure. In response to ABA, phosphorylates the ESCRT-I complex component FREE1, which is required for ABA-induced FREE1 nuclear import. The sequence is that of Serine/threonine-protein kinase SRK2D (SRK2D) from Arabidopsis thaliana (Mouse-ear cress).